We begin with the raw amino-acid sequence, 298 residues long: MARTDHDRWDLATSVGATATMVAAQRALSSDANLIDDPYAAPLVRAVGIDVYVRLVDGEIQPGTSEFDPHRMAKGMACRTRFYDDFFLDAARAGVGQAVILASGLDARAYRLPWPAGTVVYEVDMPDVIEFKTLTLADLGAQPTAQRRTVAIDLRDDWAAALREEGFDTQAPAAWSAEGLLVYLPEQAQDALFDNITALSAPGSRLAFDFVPDTAVFADPRWRAHHERMSELGFEVDFNDLVYHGERSHIVDHLSGRGWRVTSRTIAELHAANGFAYAADDVAAAFADVTYSSAVLGG.

S-adenosyl-L-methionine contacts are provided by residues Asp124 and 153–154 (DL).

It belongs to the UPF0677 family.

Its function is as follows. Exhibits S-adenosyl-L-methionine-dependent methyltransferase activity. In Mycobacterium avium (strain 104), this protein is Putative S-adenosyl-L-methionine-dependent methyltransferase MAV_0778.